The sequence spans 242 residues: Vacuole localized DSC protein 1 (242 aa).

The next 2 helical transmembrane spans lie at 128 to 148 and 152 to 172; these read PYGFVIMLLIREFTCPVPTAF and LLLVLLDILLLFCQIVIINGS.

As to quaternary structure, part of the vacuole-localized DSC E3 ligase complex composed of at least TUL1, DSC2, DSC3, UBX3, CDC48 and VLD1.

The protein localises to the vacuole membrane. Functionally, component of the vacuole-localized DSC E3 ubiquitin ligase complex involved in the targeting of the complex to the vacuole membrane via the AP3 pathway to ubiquinate vacuolar membrane proteins. Competes with GLD1 to determine the subcellular localizations of the DSC complex. The chain is Vacuole localized DSC protein 1 from Saccharomyces cerevisiae (strain ATCC 204508 / S288c) (Baker's yeast).